We begin with the raw amino-acid sequence, 292 residues long: AKT-interacting protein (292 aa).

Over residues 1–11 the composition is skewed to polar residues; it reads MNPLWSMSSGS. Positions 1–64 are disordered; sequence MNPLWSMSSG…SPAPAAQSTN (64 aa). Positions 14 to 23 are enriched in basic and acidic residues; sequence KRAEGEEKTL. A Phosphoserine modification is found at Ser30. In terms of domain architecture, UBC core spans 74–222; it reads YLEYSLLAEF…VVDSVKVCTA (149 aa).

The protein belongs to the ubiquitin-conjugating enzyme family. FTS subfamily. Component of the FTS/Hook/FHIP complex (FHF complex), composed of AKTIP/FTS, FHIP1B, and one or more members of the Hook family of proteins HOOK1, HOOK2, and HOOK3. Interacts directly with HOOK1, HOOK2 and HOOK3. The FHF complex associates with the homotypic vesicular sorting complex (the HOPS complex). Also interacts with AKT1. May interact with FHIP1A.

The protein localises to the cytoplasm. Its subcellular location is the cell membrane. Its function is as follows. Component of the FTS/Hook/FHIP complex (FHF complex). The FHF complex may function to promote vesicle trafficking and/or fusion via the homotypic vesicular protein sorting complex (the HOPS complex). Regulates apoptosis by enhancing phosphorylation and activation of AKT1. Increases release of TNFSF6 via the AKT1/GSK3B/NFATC1 signaling cascade. FHF complex promotes the distribution of AP-4 complex to the perinuclear area of the cell. The sequence is that of AKT-interacting protein (Aktip) from Rattus norvegicus (Rat).